The chain runs to 300 residues: Recombination-promoting nuclease RpnC (300 aa).

The protein belongs to the Rpn/YhgA-like nuclease family.

Functionally, a low activity DNA endonuclease yielding 3'-hydroxyl ends. Upon expression enhances RecA-independent DNA recombination 2.9-fold, concomitantly reducing viability by 59% and inducing DNA damage as measured by induction of the SOS repair response. The polypeptide is Recombination-promoting nuclease RpnC (Escherichia coli (strain K12)).